The sequence spans 166 residues: Anterior gradient protein 3 (166 aa).

The N-terminal stretch at 1 to 21 (MMLHSALGLCLLLVTVSSNLA) is a signal peptide. The Prevents secretion from ER motif lies at 163-166 (QSEL).

The protein belongs to the AGR family. In terms of assembly, interacts with LYPD3 and DAG1 (alphaDAG1). In terms of tissue distribution, expressed in the lung, in the ciliated cells of the airway epithelium. Expression increased with differentiation of airway epithelial cells. Not detected in the mucous cells. Expressed in ciliated cells in the oviduct. Also detected in stomach, colon, prostate and liver. Expressed in breast, ovary, prostate and liver cancer. Expression is associated with the level of differentiation of breast cancer (at protein level).

It localises to the endoplasmic reticulum. In terms of biological role, required for calcium-mediated regulation of ciliary beat frequency and mucociliary clearance in the airway. Might be involved in the regulation of intracellular calcium in tracheal epithelial cells. The polypeptide is Anterior gradient protein 3 (AGR3) (Homo sapiens (Human)).